Reading from the N-terminus, the 105-residue chain is Integration host factor subunit beta (105 aa).

Belongs to the bacterial histone-like protein family. In terms of assembly, heterodimer of an alpha and a beta chain.

Its function is as follows. This protein is one of the two subunits of integration host factor, a specific DNA-binding protein that functions in genetic recombination as well as in transcriptional and translational control. This chain is Integration host factor subunit beta, found in Bradyrhizobium sp. (strain ORS 278).